The sequence spans 123 residues: uncharacterized protein (123 aa).

This is an uncharacterized protein from Shigella boydii serotype 4 (strain Sb227).